Here is a 375-residue protein sequence, read N- to C-terminus: Putative actin-26 (375 aa).

The protein belongs to the actin family.

The protein resides in the cytoplasm. The protein localises to the cytoskeleton. It catalyses the reaction ATP + H2O = ADP + phosphate + H(+). In terms of biological role, actins are highly conserved proteins that are involved in various types of cell motility and are ubiquitously expressed in all eukaryotic cells. Multiple isoforms are involved in various cellular functions such as cytoskeleton structure, cell mobility, chromosome movement and muscle contraction. In Dictyostelium discoideum (Social amoeba), this protein is Putative actin-26 (act26).